The primary structure comprises 84 residues: Subtilisin-chymotrypsin inhibitor-2A (84 aa).

A disordered region spans residues 1–23 (MSSVEKKPEGVNTGAGDRHNLKT).

This sequence belongs to the protease inhibitor I13 (potato type I serine protease inhibitor) family.

Inhibits both subtilisin and chymotrypsin. This Hordeum vulgare (Barley) protein is Subtilisin-chymotrypsin inhibitor-2A.